Consider the following 676-residue polypeptide: Cysteine-rich receptor-like protein kinase 8 (676 aa).

The first 34 residues, 1 to 34 (MYIVSMFGLAGLEALICFIFLFLFSFLTSFKASA), serve as a signal peptide directing secretion. The Extracellular segment spans residues 35–291 (QNPFYLNHDC…IPGKSGNSTV (257 aa)). Gnk2-homologous domains lie at 38–142 (FYLN…HKNF) and 151–255 (ELIM…LYAF). N-linked (GlcNAc...) asparagine glycans are attached at residues Asn-46, Asn-53, Asn-71, Asn-114, Asn-159, Asn-187, Asn-257, and Asn-288. A helical transmembrane segment spans residues 292–312 (LVVAIVVLAVLLFIALVGYCF). Residues 313-676 (LAQRTKKTFD…DELITDLYPR (364 aa)) lie on the Cytoplasmic side of the membrane. The 287-residue stretch at 353-639 (FAESNKIGRG…TLPVPRQPGF (287 aa)) folds into the Protein kinase domain. ATP-binding positions include 359–367 (IGRGGFGEV) and Lys-381. Tyr-426 bears the Phosphotyrosine mark. Residue Asp-478 is the Proton acceptor of the active site. Residue Ser-482 is modified to Phosphoserine. A Phosphothreonine modification is found at Thr-518. Residue Tyr-526 is modified to Phosphotyrosine. The segment at 640–666 (FIQSSPVKDPTDSDQSTTTKSTPASID) is disordered. Positions 652–662 (SDQSTTTKSTP) are enriched in low complexity.

This sequence belongs to the protein kinase superfamily. Ser/Thr protein kinase family. CRK subfamily.

Its subcellular location is the membrane. The enzyme catalyses L-seryl-[protein] + ATP = O-phospho-L-seryl-[protein] + ADP + H(+). The catalysed reaction is L-threonyl-[protein] + ATP = O-phospho-L-threonyl-[protein] + ADP + H(+). The sequence is that of Cysteine-rich receptor-like protein kinase 8 (CRK8) from Arabidopsis thaliana (Mouse-ear cress).